Consider the following 346-residue polypeptide: Cyclin-dependent kinase 20 (346 aa).

The region spanning 4–288 (YCILGRIGEG…ASKALLHQYF (285 aa)) is the Protein kinase domain. Residues 10-18 (IGEGAHGIV) and K33 contribute to the ATP site. D127 serves as the catalytic Proton acceptor.

It belongs to the protein kinase superfamily. CMGC Ser/Thr protein kinase family. CDC2/CDKX subfamily. In terms of assembly, monomer. Interacts with TBC1D32. Interacts with MAK.

It localises to the nucleus. Its subcellular location is the cytoplasm. The protein localises to the cell projection. The protein resides in the cilium. The catalysed reaction is L-seryl-[protein] + ATP = O-phospho-L-seryl-[protein] + ADP + H(+). It catalyses the reaction L-threonyl-[protein] + ATP = O-phospho-L-threonyl-[protein] + ADP + H(+). Required for high-level Shh responses in the developing neural tube. Together with TBC1D32, controls the structure of the primary cilium by coordinating assembly of the ciliary membrane and axoneme, allowing GLI2 to be properly activated in response to SHH signaling. Involved in cell growth. Activates CDK2, a kinase involved in the control of the cell cycle, by phosphorylating residue 'Thr-160'. This chain is Cyclin-dependent kinase 20 (CDK20), found in Homo sapiens (Human).